The primary structure comprises 34 residues: Crassicorin-II (34 aa).

Cysteines 6 and 30 form a disulfide.

As to expression, highly expressed by the mesenteries. Moderately expressed by the pharynx. Weakly expressed by the gonad and pedal disk. No expression in tentacle.

The protein localises to the secreted. It is found in the nematocyst. Its function is as follows. Peptide with both antimicrobial and neurotoxin activities. Cationic AMP with antimicrobial activity against both Gram-positive bacteria (B.subtilis) and Gram-negative bacteria (E.coli and S.enterica). Shows no significant antimicrobial activity against bacteria S.aureus and P.aeruginosa, as well as the fungus C.albicans. In vivo, induces reversible paralytic activity towards the shrimp P.paucidens. May act by impairing sodium or potassium channels in the prey. The chain is Crassicorin-II from Urticina crassicornis (Mottled anemone).